The primary structure comprises 316 residues: D-alanine--D-alanine ligase (316 aa).

Positions 108-310 (ERYEELSVVK…FDELVDLIIK (203 aa)) constitute an ATP-grasp domain. 138 to 193 (EEKIGLPCVVKPRKEGSSIGTHICFSKEELLDALKNEFKNYDEMIVQEYIKGKEIT) contacts ATP. Residues Asp265, Glu277, and Asn279 each coordinate Mg(2+).

The protein belongs to the D-alanine--D-alanine ligase family. The cofactor is Mg(2+). Mn(2+) serves as cofactor.

It is found in the cytoplasm. The catalysed reaction is 2 D-alanine + ATP = D-alanyl-D-alanine + ADP + phosphate + H(+). It participates in cell wall biogenesis; peptidoglycan biosynthesis. In terms of biological role, cell wall formation. The chain is D-alanine--D-alanine ligase from Fervidobacterium nodosum (strain ATCC 35602 / DSM 5306 / Rt17-B1).